Reading from the N-terminus, the 288-residue chain is Energy-coupling factor transporter ATP-binding protein EcfA2 (288 aa).

Residues 3–246 (IKLEQLGYCY…PDELVDLGLS (244 aa)) enclose the ABC transporter domain. An ATP-binding site is contributed by 40–47 (GHTGSGKS).

The protein belongs to the ABC transporter superfamily. Energy-coupling factor EcfA family. Forms a stable energy-coupling factor (ECF) transporter complex composed of 2 membrane-embedded substrate-binding proteins (S component), 2 ATP-binding proteins (A component) and 2 transmembrane proteins (T component).

It is found in the cell membrane. Its function is as follows. ATP-binding (A) component of a common energy-coupling factor (ECF) ABC-transporter complex. Unlike classic ABC transporters this ECF transporter provides the energy necessary to transport a number of different substrates. This is Energy-coupling factor transporter ATP-binding protein EcfA2 from Listeria innocua serovar 6a (strain ATCC BAA-680 / CLIP 11262).